The sequence spans 203 residues: 22.3 kDa class VI heat shock protein (203 aa).

A sHSP domain is found at 86–203 (ALRRGARTTV…DAHQAAAATA (118 aa)).

This sequence belongs to the small heat shock protein (HSP20) family. May form oligomeric structures.

It localises to the cytoplasm. The polypeptide is 22.3 kDa class VI heat shock protein (HSP22.3) (Oryza sativa subsp. japonica (Rice)).